The primary structure comprises 226 residues: MNNALLDARLQQALGYTFSRSGLLQQALTHRSYGALNNERLEFLGDSVLNCSVARALYDAFPDLPEGSLSRLRANLVRQETLAEIAGALRLGDSLRLGEGELKSGGFRRPSILADALESLFGAVFLDAGFDEAQRVVRRLFDPLVAQIDPKASGKDPKTRLQEILQSRRLPLPEYRLVGTEGEAHDQSFIVECLLAKPVLSTRGTGKSRRAAEQEAARQACAELQR.

An RNase III domain is found at 7–129 (DARLQQALGY…LFGAVFLDAG (123 aa)). Glu42 serves as a coordination point for Mg(2+). Residue Asp46 is part of the active site. Mg(2+) contacts are provided by Asp115 and Glu118. The active site involves Glu118. Positions 156 to 226 (DPKTRLQEIL…ARQACAELQR (71 aa)) constitute a DRBM domain.

The protein belongs to the ribonuclease III family. Homodimer. It depends on Mg(2+) as a cofactor.

It is found in the cytoplasm. It catalyses the reaction Endonucleolytic cleavage to 5'-phosphomonoester.. In terms of biological role, digests double-stranded RNA. Involved in the processing of primary rRNA transcript to yield the immediate precursors to the large and small rRNAs (23S and 16S). Processes some mRNAs, and tRNAs when they are encoded in the rRNA operon. Processes pre-crRNA and tracrRNA of type II CRISPR loci if present in the organism. The polypeptide is Ribonuclease 3 (Thiobacillus denitrificans (strain ATCC 25259 / T1)).